Consider the following 249-residue polypeptide: UPF0758 protein Oant_1909 (249 aa).

The 123-residue stretch at 127–249 (VLGSWNKVIE…HASFRGLGLI (123 aa)) folds into the MPN domain. Zn(2+) is bound by residues H198, H200, and D211. The JAMM motif signature appears at 198–211 (HNHPSGDPTPSRAD).

This sequence belongs to the UPF0758 family.

The sequence is that of UPF0758 protein Oant_1909 from Brucella anthropi (strain ATCC 49188 / DSM 6882 / CCUG 24695 / JCM 21032 / LMG 3331 / NBRC 15819 / NCTC 12168 / Alc 37) (Ochrobactrum anthropi).